The following is a 92-amino-acid chain: Small ribosomal subunit protein uS19c (92 aa).

This sequence belongs to the universal ribosomal protein uS19 family.

The protein localises to the plastid. It localises to the chloroplast. In terms of biological role, protein S19 forms a complex with S13 that binds strongly to the 16S ribosomal RNA. The chain is Small ribosomal subunit protein uS19c from Adiantum capillus-veneris (Maidenhair fern).